The primary structure comprises 300 residues: Nuclear egress protein 1 (300 aa).

A CCCH-type zinc finger spans residues 90–217; it reads CLSLSGMGYY…YIVFPGKALH (128 aa).

The protein belongs to the herpesviridae NEC1 protein family. In terms of assembly, forms a heterohexameric complex with NEC2. Interacts with capsid vertex specific component 2/CVC2; this interaction directs the capsid to the host inner nuclear membrane to initiate budding. In terms of processing, phosphorylated at serine residues in the N-terminus. This phosphorylation regulates the localization within the inner nuclear membrane.

The protein resides in the host nucleus inner membrane. Plays an essential role in virion nuclear egress, the first step of virion release from infected cell. Within the host nucleus, NEC1 interacts with the newly formed capsid through the vertexes and directs it to the inner nuclear membrane by associating with NEC2. Induces the budding of the capsid at the inner nuclear membrane as well as its envelopment into the perinuclear space. There, the NEC1/NEC2 complex promotes the fusion of the enveloped capsid with the outer nuclear membrane and the subsequent release of the viral capsid into the cytoplasm where it will reach the secondary budding sites in the host Golgi or trans-Golgi network. The chain is Nuclear egress protein 1 from Gallid herpesvirus 2 (strain Chicken/Md5/ATCC VR-987) (GaHV-2).